The following is a 360-amino-acid chain: DNA replication and repair protein RecF (360 aa).

G33–T40 contributes to the ATP binding site.

Belongs to the RecF family.

It is found in the cytoplasm. Functionally, the RecF protein is involved in DNA metabolism; it is required for DNA replication and normal SOS inducibility. RecF binds preferentially to single-stranded, linear DNA. It also seems to bind ATP. This is DNA replication and repair protein RecF from Rickettsia massiliae (strain Mtu5).